The sequence spans 737 residues: ATP-dependent RNA helicase SUV3, mitochondrial (737 aa).

A mitochondrion-targeting transit peptide spans 1-25 (MALVKYSTVFFPLRSLRLFVSIKKA). Positions 226–365 (EARKIRRHII…KSVLPLVKSI (140 aa)) constitute a Helicase ATP-binding domain. 239 to 246 (GPTNSGKT) lines the ATP pocket. The Helicase C-terminal domain maps to 390–546 (PIKDGIKGLR…YLKTAVTWPT (157 aa)).

It belongs to the helicase family. In terms of assembly, MSU1 and SUV3 are the two components of the mitochondrial degradosome (mtEXO).

It is found in the mitochondrion matrix. It carries out the reaction ATP + H2O = ADP + phosphate + H(+). Required for intron-independent turnover and processing of mitochondrial RNA. It is a key control element in nuclear-mitochondrial interactions. The polypeptide is ATP-dependent RNA helicase SUV3, mitochondrial (SUV3) (Saccharomyces cerevisiae (strain ATCC 204508 / S288c) (Baker's yeast)).